The sequence spans 181 residues: MAPDPKLPSADLPSQKQVIELLDGEFARAGYEIDDVVVNAATRPARITIVADGDKGLDLDAVAMLSRLASGLLDTVDTGDTPYVLEVTSPGVDRPLTTEKHFRRARGRKAELSLADGSSLTARLGGTDGDQVNVVVAQGKDFAVRQIPLREITKAVVQVEFSPPNRRELELAEQTGKGARA.

Belongs to the RimP family.

The protein resides in the cytoplasm. In terms of biological role, required for maturation of 30S ribosomal subunits. The protein is Ribosome maturation factor RimP of Mycolicibacterium smegmatis (strain ATCC 700084 / mc(2)155) (Mycobacterium smegmatis).